The chain runs to 1501 residues: Pleiotropic ABC efflux transporter of multiple drugs CDR1 (1501 aa).

The disordered stretch occupies residues 1–30; that stretch reads MSDSKMSSQDESKLEKAISQDSSSENHSIN. The Cytoplasmic portion of the chain corresponds to 1-513; that stretch reads MSDSKMSSQD…NFLRMKGDPS (513 aa). The segment at 2 to 512 is NBD1; that stretch reads SDSKMSSQDE…RNFLRMKGDP (511 aa). A compositionally biased stretch (basic and acidic residues) spans 8 to 18; that stretch reads SQDESKLEKAI. In terms of domain architecture, ABC transporter 1 spans 150–404; the sequence is LATEGFRHFQ…FEKMGWKCPQ (255 aa). A helical membrane pass occupies residues 514-534; that stretch reads IPIFSVFGQLVMGLILSSVFY. Over 535–548 the chain is Extracellular; that stretch reads NLSQTTGSFYYRGA. The helical transmembrane segment at 549–569 threads the bilayer; that stretch reads AMFFAVLFNAFSSLLEIMSLF. Residues 570 to 597 lie on the Cytoplasmic side of the membrane; the sequence is EARPIVEKHKKYALYRPSADALASIISE. A helical membrane pass occupies residues 598–618; the sequence is LPVKLAMSMSFNFVFYFMVNF. Topologically, residues 619–622 are extracellular; that stretch reads RRNP. A helical membrane pass occupies residues 623-643; that stretch reads GRFFFYWLMCIWCTFVMSHLF. Residues 644–654 lie on the Cytoplasmic side of the membrane; that stretch reads RSIGAVSTSIS. Residues 655–675 traverse the membrane as a helical segment; the sequence is GAMTPATVLLLAMVIYTGFVI. The Extracellular portion of the chain corresponds to 676 to 764; it reads PTPSMLGWSR…QYYNSHKWRN (89 aa). Residues 765-785 traverse the membrane as a helical segment; sequence LGITIGFAVFFLAIYIALTEF. The Cytoplasmic portion of the chain corresponds to 786–1195; that stretch reads NKGAMQKGEI…TIVQDWRSPG (410 aa). Positions 786–1195 are NBD2; that stretch reads NKGAMQKGEI…TIVQDWRSPG (410 aa). The region spanning 859 to 1103 is the ABC transporter 2 domain; sequence FFWRDLTYQV…MINYFEKYGA (245 aa). Residue 895 to 902 participates in ATP binding; sequence GASGAGKT. Positions 1137–1164 form a coiled coil; the sequence is RNSSEYQAVREEINRMEAELSKLPRDND. A helical transmembrane segment spans residues 1196–1216; sequence YIYSKIFLVVSAALFNGFSFF. The Extracellular portion of the chain corresponds to 1217 to 1229; it reads KAKNNMQGLQNQM. The chain crosses the membrane as a helical span at residues 1230–1250; sequence FSVFMFFIPFNTLVQQMLPYF. Residues 1251–1280 are Cytoplasmic-facing; that stretch reads VKQRDVYEVREAPSRTFSWFAFIAGQITSE. The helical transmembrane segment at 1281–1301 threads the bilayer; that stretch reads IPYQVAVGTIAFFCWYYPLGL. Residues 1302 to 1314 lie on the Extracellular side of the membrane; that stretch reads YNNATPTDSVNPR. The helical transmembrane segment at 1315–1335 threads the bilayer; sequence GVLMWMLVTAFYVYTATMGQL. The Cytoplasmic portion of the chain corresponds to 1336–1355; the sequence is CMSFSELADNAANLATLLFT. The helical transmembrane segment at 1356 to 1376 threads the bilayer; the sequence is MCLNFCGVLAGPDVLPGFWIF. The Extracellular segment spans residues 1377 to 1466; that stretch reads MYRCNPFTYL…NSLYSERWRN (90 aa). A helical membrane pass occupies residues 1467–1487; sequence FGIFIAFIAINIILTVIFYWL. The Cytoplasmic segment spans residues 1488-1501; that stretch reads ARVPKGNREKKNKK.

Belongs to the ABC transporter superfamily.

The protein resides in the cell membrane. With respect to regulation, disulfiram reverses CDR1-mediated drug resistance by interaction with both ATP and substrate-binding sites of the transporter and may be useful for antifungal therapy. In terms of biological role, pleiotropic ABC efflux transporter that confers resistance to numerous chemicals including anisomycin, cycloheximide, fluconazole, miconazole, ketoconazole, itriconazole, nystatin, terbinafine, amorolfine, brefeldin A, amphotericin B, fluphenazine, as well as estrogen. Plays a role in farnesol-induced apoptotic process through glutathione efflux activity. Mediates in-to-out translocation of membrane phospholipids including aminophospholipids and thus regulates asymmetric distribution of phosphatidylethanolamine. Exhibits nucleoside triphosphatase activity. This chain is Pleiotropic ABC efflux transporter of multiple drugs CDR1 (CDR1), found in Candida albicans (strain SC5314 / ATCC MYA-2876) (Yeast).